We begin with the raw amino-acid sequence, 475 residues long: MNVAAGGPGTASASTTAANSIFNNSLLASATGATTMPMAQLADGWLELESDPGLFTLLLEDFGCHDVQVEEVYDLQKPIESPYGFIFLFRWIEERRARRKIVETTAEIFVKDEEAISSIFFAQQVVPNSCATHALLSVLLNCNENNLQLGDTLSRLKVHTKGMSPENKGLAIGNTPELACAHNSHAIPQARRRLERTGAGVASCRFTGEAFHFVSFVPISGQLFELDGLKPYPMNHGGWEDHEDWTDKFRRVMAERLGIATGEQDIRFNLMAVVPDRRIAITHKLKMLRTNQAIVSGTLQKLLKADEQGESGNGDQQRPDTPTTLLEPSAFTAKDLQLLLKNLDTEIAINEQNLADENDRRHMFKVDASRRTHNYDKFICTFLSMLAHQGVLGELVSQHLLPSKKVSGQSAANRISKQNSAASSAGANAGAAAGVTPKSQQQQQQPQTAASKNGKSPGKTPGRRRKGRNKCRKRK.

The UCH catalytic domain occupies 44–275 (GWLELESDPG…IRFNLMAVVP (232 aa)). Residue cysteine 130 is the Nucleophile of the active site. The active-site Proton donor is histidine 212. The stretch at 333-360 (AKDLQLLLKNLDTEIAINEQNLADENDR) forms a coiled coil. A ULD domain is found at 374–402 (NYDKFICTFLSMLAHQGVLGELVSQHLLP). Positions 404 to 475 (KKVSGQSAAN…KGRNKCRKRK (72 aa)) are positively charged C-terminal tail required for binding nucleosomes. A disordered region spans residues 411-475 (AANRISKQNS…KGRNKCRKRK (65 aa)). A compositionally biased stretch (low complexity) spans 419-460 (NSAASSAGANAGAAAGVTPKSQQQQQQPQTAASKNGKSPGKT). A compositionally biased stretch (basic residues) spans 461 to 475 (PGRRRKGRNKCRKRK).

Belongs to the peptidase C12 family. BAP1 subfamily. Catalytic component of the polycomb repressive deubiquitinase (PR-DUB) complex, at least composed of caly/calypso, Asx and sba (MBD5/6 homolog). The PR-DUB complex associates with nucleosomes to mediate deubiquitination of histone H2AK118ub1 substrates; the association requires the positively charged C-terminal tail of caly, probably due to direct binding of DNA. Interacts (via ULD domain) with Asx (via DEUBAD domain); the interaction produces a stable heterodimer with a composite binding site for ubiquitin. Homodimerizes (via coiled-coil hinge-region between the UCH and ULD domains) to mediate assembly of 2 copies of the caly-Asx heterodimer into a bisymmetric tetramer; dimerization enhances PR-DUB association with nucleosomes.

The protein localises to the nucleus. The catalysed reaction is Thiol-dependent hydrolysis of ester, thioester, amide, peptide and isopeptide bonds formed by the C-terminal Gly of ubiquitin (a 76-residue protein attached to proteins as an intracellular targeting signal).. Functionally, catalytic component of the polycomb repressive deubiquitinase (PR-DUB) complex, a complex that specifically mediates deubiquitination of histone H2A monoubiquitinated at 'Lys-119' (H2AK118ub1). Mediates bisymmetric organization of the PR-DUB complex and is involved in association with nucleosomes to mediate deubiquitination. Does not deubiquitinate monoubiquitinated histone H2B. Required to maintain the transcriptionally repressive state of homeotic genes throughout development. The PR-DUB complex has weak or no activity toward 'Lys-48'- and 'Lys-63'-linked polyubiquitin chains. Polycomb group (PcG) protein. The protein is Ubiquitin carboxyl-terminal hydrolase calypso of Drosophila persimilis (Fruit fly).